A 309-amino-acid polypeptide reads, in one-letter code: Glutaminase (309 aa).

S64, N114, E160, N167, Y191, Y243, and V261 together coordinate substrate.

It belongs to the glutaminase family. In terms of assembly, homotetramer.

It carries out the reaction L-glutamine + H2O = L-glutamate + NH4(+). In Methylorubrum extorquens (strain PA1) (Methylobacterium extorquens), this protein is Glutaminase.